A 446-amino-acid polypeptide reads, in one-letter code: Maltoporin (446 aa).

Positions 1–25 (MMITLRKLPLAVAVAAGVMSAQAMA) are cleaved as a signal peptide.

The protein belongs to the porin LamB (TC 1.B.3) family. As to quaternary structure, homotrimer formed of three 18-stranded antiparallel beta-barrels, containing three independent channels.

The protein localises to the cell outer membrane. It catalyses the reaction beta-maltose(in) = beta-maltose(out). Functionally, involved in the transport of maltose and maltodextrins. In Escherichia coli O7:K1 (strain IAI39 / ExPEC), this protein is Maltoporin.